We begin with the raw amino-acid sequence, 819 residues long: Leucine--tRNA ligase (819 aa).

Positions 42-52 (PYPSGRLHMGH) match the 'HIGH' region motif. The 'KMSKS' region signature appears at 576 to 580 (KMSKS). Residue lysine 579 coordinates ATP.

This sequence belongs to the class-I aminoacyl-tRNA synthetase family.

The protein localises to the cytoplasm. It carries out the reaction tRNA(Leu) + L-leucine + ATP = L-leucyl-tRNA(Leu) + AMP + diphosphate. The sequence is that of Leucine--tRNA ligase from Nitrosococcus oceani (strain ATCC 19707 / BCRC 17464 / JCM 30415 / NCIMB 11848 / C-107).